The primary structure comprises 53 residues: Small ribosomal subunit protein uS14m (53 aa).

The protein belongs to the universal ribosomal protein uS14 family.

The protein localises to the mitochondrion. The polypeptide is Small ribosomal subunit protein uS14m (RPS14) (Bigelowiella natans (Pedinomonas minutissima)).